Here is a 264-residue protein sequence, read N- to C-terminus: Ribonuclease H (264 aa).

Positions 55-88 (GSRYSSSSGPYRRSTTSYGYSPYSSSSSNYSARH) are disordered. A compositionally biased stretch (low complexity) spans 56–85 (SRYSSSSGPYRRSTTSYGYSPYSSSSSNYS). Serine 97 bears the Phosphoserine mark. The RNase H type-1 domain maps to 120–263 (CSDRQVVYAD…ADMLARRGAS (144 aa)). Mg(2+) is bound by residues aspartate 129, glutamate 171, aspartate 191, and aspartate 255.

Belongs to the RNase H family. Mg(2+) is required as a cofactor.

The enzyme catalyses Endonucleolytic cleavage to 5'-phosphomonoester.. Endonuclease that specifically degrades the RNA of RNA-DNA hybrids. The polypeptide is Ribonuclease H (rnh1) (Schizosaccharomyces pombe (strain 972 / ATCC 24843) (Fission yeast)).